Consider the following 1755-residue polypeptide: Transposon Ty1-BL Gag-Pol polyprotein (1755 aa).

Polar residues-rich tracts occupy residues 20 to 31 (SVTSKEVQTTQD), 46 to 55 (VSTQANSQQP), and 137 to 168 (VGTH…TNQH). Disordered regions lie at residues 20 to 84 (SVTS…QNGP), 137 to 173 (VGTH…RPPP), and 350 to 420 (QQES…IRGS). The tract at residues 299-401 (NNGIPINNKV…NSQSRTARAH (103 aa)) is RNA-binding. Residues 363–372 (SPSDEKKDSR) show a composition bias toward basic and acidic residues. Residues 373–411 (TYTNTTKPKSITRNSQKPNNSQSRTARAHNVSTFNNSPG) are compositionally biased toward polar residues. The For protease activity; shared with dimeric partner role is filled by aspartate 461. The integrase-type zinc finger-like stretch occupies residues 583–640 (NVHTSESTRKYPYPFIHRMLAHANAQTIRYSLKNNTITYFNESDVDWSSAIDYQCPDC). One can recognise an Integrase catalytic domain in the interval 660–835 (NSYEPFQYLH…AGLDISTLLP (176 aa)). Residues aspartate 671 and aspartate 736 each coordinate Mg(2+). The segment at 956 to 1172 (SKAVSPTDST…LGGIGDSNAY (217 aa)) is disordered. The span at 960–969 (SPTDSTPPST) shows a compositional bias: low complexity. 2 stretches are compositionally biased toward polar residues: residues 1005–1017 (STPQ…STDS) and 1031–1043 (MSQS…SYAS). Residues 1044–1053 (KSKDFRHSDS) are compositionally biased toward basic and acidic residues. 2 stretches are compositionally biased toward polar residues: residues 1054–1082 (YSDN…QTSE) and 1095–1106 (SIDTSSSESNSL). The short motif at 1178–1212 (KKRSLEDNETEIKVSRDTWNTKNMRSLEPPRSKKR) is the Bipartite nuclear localization signal element. The Reverse transcriptase Ty1/copia-type domain maps to 1338–1476 (NNYHITQLDI…DILGLEIKYQ (139 aa)). Positions 1346, 1427, 1428, 1610, 1652, and 1685 each coordinate Mg(2+). The RNase H Ty1/copia-type domain occupies 1610–1752 (DASYGNQPYY…IKTFKLLTNK (143 aa)).

In terms of assembly, the capsid protein forms a homotrimer, from which the VLPs are assembled. The protease is a homodimer, whose active site consists of two apposed aspartic acid residues. In terms of processing, initially, virus-like particles (VLPs) are composed of the structural unprocessed proteins Gag and Gag-Pol, and also contain the host initiator methionine tRNA (tRNA(i)-Met) which serves as a primer for minus-strand DNA synthesis, and a dimer of genomic Ty RNA. Processing of the polyproteins occurs within the particle and proceeds by an ordered pathway, called maturation. First, the protease (PR) is released by autocatalytic cleavage of the Gag-Pol polyprotein yielding capsid protein p45 and a Pol-p154 precursor protein. This cleavage is a prerequisite for subsequent processing of Pol-p154 at the remaining sites to release the mature structural and catalytic proteins. Maturation takes place prior to the RT reaction and is required to produce transposition-competent VLPs.

The protein resides in the cytoplasm. The protein localises to the nucleus. It carries out the reaction DNA(n) + a 2'-deoxyribonucleoside 5'-triphosphate = DNA(n+1) + diphosphate. The catalysed reaction is Endonucleolytic cleavage to 5'-phosphomonoester.. Functionally, capsid protein (CA) is the structural component of the virus-like particle (VLP), forming the shell that encapsulates the retrotransposons dimeric RNA genome. The particles are assembled from trimer-clustered units and there are holes in the capsid shells that allow for the diffusion of macromolecules. CA also has nucleocapsid-like chaperone activity, promoting primer tRNA(i)-Met annealing to the multipartite primer-binding site (PBS), dimerization of Ty1 RNA and initiation of reverse transcription. In terms of biological role, the aspartyl protease (PR) mediates the proteolytic cleavages of the Gag and Gag-Pol polyproteins after assembly of the VLP. Reverse transcriptase/ribonuclease H (RT) is a multifunctional enzyme that catalyzes the conversion of the retro-elements RNA genome into dsDNA within the VLP. The enzyme displays a DNA polymerase activity that can copy either DNA or RNA templates, and a ribonuclease H (RNase H) activity that cleaves the RNA strand of RNA-DNA heteroduplexes during plus-strand synthesis and hydrolyzes RNA primers. The conversion leads to a linear dsDNA copy of the retrotransposon that includes long terminal repeats (LTRs) at both ends. Its function is as follows. Integrase (IN) targets the VLP to the nucleus, where a subparticle preintegration complex (PIC) containing at least integrase and the newly synthesized dsDNA copy of the retrotransposon must transit the nuclear membrane. Once in the nucleus, integrase performs the integration of the dsDNA into the host genome. This Saccharomyces cerevisiae (strain ATCC 204508 / S288c) (Baker's yeast) protein is Transposon Ty1-BL Gag-Pol polyprotein (TY1B-BL).